Here is a 269-residue protein sequence, read N- to C-terminus: Glutamate racemase (269 aa).

Residues 7–8 (DS) and 39–40 (YG) each bind substrate. Residue C70 is the Proton donor/acceptor of the active site. Residue 71–72 (NT) coordinates substrate. C194 (proton donor/acceptor) is an active-site residue. Residue 195–196 (TH) participates in substrate binding.

The protein belongs to the aspartate/glutamate racemases family.

The enzyme catalyses L-glutamate = D-glutamate. The protein operates within cell wall biogenesis; peptidoglycan biosynthesis. Provides the (R)-glutamate required for cell wall biosynthesis. The chain is Glutamate racemase from Ruegeria pomeroyi (strain ATCC 700808 / DSM 15171 / DSS-3) (Silicibacter pomeroyi).